Consider the following 297-residue polypeptide: Aspartate carbamoyltransferase catalytic subunit (297 aa).

Carbamoyl phosphate is bound by residues arginine 51 and threonine 52. Residue lysine 79 coordinates L-aspartate. Carbamoyl phosphate-binding residues include arginine 101, histidine 130, and glutamine 133. Arginine 163 and arginine 215 together coordinate L-aspartate. Carbamoyl phosphate contacts are provided by glycine 256 and proline 257.

This sequence belongs to the aspartate/ornithine carbamoyltransferase superfamily. ATCase family. Heterododecamer (2C3:3R2) of six catalytic PyrB chains organized as two trimers (C3), and six regulatory PyrI chains organized as three dimers (R2).

It catalyses the reaction carbamoyl phosphate + L-aspartate = N-carbamoyl-L-aspartate + phosphate + H(+). It participates in pyrimidine metabolism; UMP biosynthesis via de novo pathway; (S)-dihydroorotate from bicarbonate: step 2/3. Catalyzes the condensation of carbamoyl phosphate and aspartate to form carbamoyl aspartate and inorganic phosphate, the committed step in the de novo pyrimidine nucleotide biosynthesis pathway. This is Aspartate carbamoyltransferase catalytic subunit from Ehrlichia ruminantium (strain Gardel).